Reading from the N-terminus, the 347-residue chain is Protein RecA (347 aa).

ATP is bound at residue 65–72 (GPESSGKT).

It belongs to the RecA family.

Its subcellular location is the cytoplasm. Functionally, can catalyze the hydrolysis of ATP in the presence of single-stranded DNA, the ATP-dependent uptake of single-stranded DNA by duplex DNA, and the ATP-dependent hybridization of homologous single-stranded DNAs. It interacts with LexA causing its activation and leading to its autocatalytic cleavage. This is Protein RecA from Stutzerimonas stutzeri (Pseudomonas stutzeri).